The sequence spans 505 residues: Kelch-like protein 42 (505 aa).

Residues 5 to 78 enclose the BTB domain; the sequence is EMVQIRLEDR…INAGGAREGW (74 aa). S43 bears the Phosphoserine mark. 6 Kelch repeats span residues 176-234, 235-282, 284-325, 327-372, 374-429, and 431-480; these read PGDV…PLAN, NLPP…NEWL, VASM…DAWN, VAPL…DMWT, FETC…RQWL, and LKEN…DSWE.

Component of the BCR(KLHL42) E3 ubiquitin ligase complex, at least composed of CUL3 and KLHL42. Interacts (via the BTB domain) with CUL3. Interacts (via the kelch domains) with KATNA1.

The protein resides in the cytoplasm. It is found in the cytoskeleton. The protein localises to the spindle. It functions in the pathway protein modification; protein ubiquitination. In terms of biological role, substrate-specific adapter of a BCR (BTB-CUL3-RBX1) E3 ubiquitin-protein ligase complex required for mitotic progression and cytokinesis. The BCR(KLHL42) E3 ubiquitin ligase complex mediates the ubiquitination and subsequent degradation of KATNA1. Involved in microtubule dynamics throughout mitosis. This is Kelch-like protein 42 (KLHL42) from Homo sapiens (Human).